The sequence spans 300 residues: 3-dehydrocarnitine:acetyl-CoA trimethylamine transferase (300 aa).

Histidine 51, histidine 53, and glutamate 254 together coordinate Zn(2+).

This sequence belongs to the BKACE family. As to quaternary structure, homotetramer. Zn(2+) serves as cofactor.

It catalyses the reaction 3-dehydrocarnitine + acetyl-CoA = N,N,N-trimethylglycyl-CoA + acetoacetate. The protein operates within amine and polyamine metabolism; carnitine metabolism. Catalyzes the condensation of dehydrocarnitine and acetyl-CoA, forming acetoacetate and betainyl-CoA (N,N,N-trimethylglycyl-CoA). Is involved in a L-carnitine degradation pathway that allows R.meliloti to grow on L-carnitine as the sole source of carbon and nitrogen. The protein is 3-dehydrocarnitine:acetyl-CoA trimethylamine transferase of Rhizobium meliloti (strain 1021) (Ensifer meliloti).